Here is a 576-residue protein sequence, read N- to C-terminus: MNIQALLSEKVSQALTAAGAPADSEAQIRQSAKAQFGDYQANGVMAVAKKLGMPPRQLAEKVVQLLALEGIAEKTEIAGPGFINIFLDKQWVASQVENALNAPKLGLTPVEPQTIVIDYSAPNVAKEMHVGHLRSTIIGDAAARTLEFLGHNVIRANHVGDWGTQFGMLIAYLEKMQNENASEMDLSDLEAFYREAKKHYDDDADFAERARGYVVKLQGGDEYCRQMWRKLVDITMTQNQINYERLNVTLTKQDVMGESLYNSMLPGIVADLKAKGLAVESEGATVVFLDEYKNKEGEPMGVIIQKKDGGYLYTTTDIACAKYRYETLNADRVLYYIDSRQHQHLMQAWTIVRKAGYVPDSVSLEHHMFGMMLGKDGKPFKTRAGGTIKLSELLDEAYDRALKLIAEKNPQMESDELSALAKVVSIGAIKYADLSKSRTTDYVFDWDNMLAFEGNTAPYMQYAYTRVASIFKRAGIQEDSLTQPITLSDEREFALATRLLQFEETITSVAREGTPHVMCSYLYDLAGLFSGFYEHCPILNAESDDVRQSRLRLALLTAKTLKQGLDTLGIETVEKM.

Positions 122–132 (PNVAKEMHVGH) match the 'HIGH' region motif.

This sequence belongs to the class-I aminoacyl-tRNA synthetase family. Monomer.

It localises to the cytoplasm. It carries out the reaction tRNA(Arg) + L-arginine + ATP = L-arginyl-tRNA(Arg) + AMP + diphosphate. In Pectobacterium carotovorum subsp. carotovorum (strain PC1), this protein is Arginine--tRNA ligase.